A 1135-amino-acid polypeptide reads, in one-letter code: Ubiquitin carboxyl-terminal hydrolase 7 (1135 aa).

In terms of domain architecture, MATH spans 31–172; sequence EGHLSLDIDC…NDTIKLRCRF (142 aa). The USP domain occupies 193–503; sequence IGLRNQGATC…SAYMLVYVRD (311 aa). The active-site Nucleophile is the C202. H442 (proton acceptor) is an active-site residue.

It belongs to the peptidase C19 family.

The protein localises to the nucleus. It catalyses the reaction Thiol-dependent hydrolysis of ester, thioester, amide, peptide and isopeptide bonds formed by the C-terminal Gly of ubiquitin (a 76-residue protein attached to proteins as an intracellular targeting signal).. In terms of biological role, hydrolase that deubiquitinates target proteins. May play a role in regulating the levels of endogenous siRNA biogenesis. The sequence is that of Ubiquitin carboxyl-terminal hydrolase 7 from Caenorhabditis elegans.